We begin with the raw amino-acid sequence, 257 residues long: Hydroxyacylglutathione hydrolase (257 aa).

Residues His56, His58, Asp60, His61, His112, Asp131, and His169 each coordinate Zn(2+).

This sequence belongs to the metallo-beta-lactamase superfamily. Glyoxalase II family. Monomer. It depends on Zn(2+) as a cofactor.

The enzyme catalyses an S-(2-hydroxyacyl)glutathione + H2O = a 2-hydroxy carboxylate + glutathione + H(+). It participates in secondary metabolite metabolism; methylglyoxal degradation; (R)-lactate from methylglyoxal: step 2/2. Thiolesterase that catalyzes the hydrolysis of S-D-lactoyl-glutathione to form glutathione and D-lactic acid. The protein is Hydroxyacylglutathione hydrolase of Ectopseudomonas mendocina (strain ymp) (Pseudomonas mendocina).